We begin with the raw amino-acid sequence, 567 residues long: Sporulation-specific protein 5 (567 aa).

The segment covering 1 to 18 has biased composition (polar residues); the sequence is MNGIITPQKQKQLMSSPS. Disordered regions lie at residues 1 to 39 and 52 to 76; these read MNGIITPQKQKQLMSSPSRDPLSTTELSTPTSQTTVDVN and ILLTPGTSPNATPGSSELGLSKKPN. Residues 21–35 show a composition bias toward low complexity; that stretch reads PLSTTELSTPTSQTT. Polar residues predominate over residues 56 to 66; sequence PGTSPNATPGS. 2 consecutive RRM domains span residues 296-380 and 384-462; these read RNVY…SLQD and TNLY…FADS.

It is found in the cytoplasm. Functionally, RNA-binding protein which plays a role in sporulation. Regulates the progression of meiosis I and may function in the vicinity of the Mei2 dot. This is Sporulation-specific protein 5 (spo5) from Schizosaccharomyces pombe (strain 972 / ATCC 24843) (Fission yeast).